A 206-amino-acid chain; its full sequence is 2-phospho-L-lactate guanylyltransferase (206 aa).

This sequence belongs to the CofC family. Homodimer.

The catalysed reaction is (2S)-2-phospholactate + GTP + H(+) = (2S)-lactyl-2-diphospho-5'-guanosine + diphosphate. It functions in the pathway cofactor biosynthesis; coenzyme F420 biosynthesis. Guanylyltransferase that catalyzes the activation of (2S)-2-phospholactate (2-PL) as (2S)-lactyl-2-diphospho-5'-guanosine, via the condensation of 2-PL with GTP. It is involved in the biosynthesis of coenzyme F420, a hydride carrier cofactor. The protein is 2-phospho-L-lactate guanylyltransferase of Archaeoglobus fulgidus (strain ATCC 49558 / DSM 4304 / JCM 9628 / NBRC 100126 / VC-16).